A 163-amino-acid chain; its full sequence is Cyclic pyranopterin monophosphate synthase (163 aa).

Substrate-binding positions include 76–78 (LCH) and 114–115 (ME). D129 is an active-site residue.

Belongs to the MoaC family. As to quaternary structure, homohexamer; trimer of dimers.

It catalyses the reaction (8S)-3',8-cyclo-7,8-dihydroguanosine 5'-triphosphate = cyclic pyranopterin phosphate + diphosphate. It functions in the pathway cofactor biosynthesis; molybdopterin biosynthesis. Catalyzes the conversion of (8S)-3',8-cyclo-7,8-dihydroguanosine 5'-triphosphate to cyclic pyranopterin monophosphate (cPMP). This Desulfovibrio desulfuricans (strain ATCC 27774 / DSM 6949 / MB) protein is Cyclic pyranopterin monophosphate synthase.